Reading from the N-terminus, the 456-residue chain is Zinc finger C2HC domain-containing protein 1C (456 aa).

Disordered stretches follow at residues M16–K46 and Y85–P113. Composition is skewed to polar residues over residues Y35–K46 and G90–G102. The stretch at V211–K265 forms a coiled coil. The disordered stretch occupies residues N336–L388. Low complexity predominate over residues S368–S382. The C2HC/C3H-type zinc finger occupies Q387–S416. Zn(2+) contacts are provided by C391, C394, H406, and C410.

The protein belongs to the ZC2HC1 family. Zn(2+) serves as cofactor.

The sequence is that of Zinc finger C2HC domain-containing protein 1C (ZC2HC1C) from Homo sapiens (Human).